The sequence spans 554 residues: CTP synthase (554 aa).

Positions 1-265 are amidoligase domain; it reads MTPLIFVTGG…DELVIEQFKL (265 aa). Residue serine 13 participates in CTP binding. Serine 13 provides a ligand contact to UTP. ATP-binding positions include 14 to 19 and aspartate 71; that span reads SLGKGI. Mg(2+) contacts are provided by aspartate 71 and glutamate 139. Residues 146–148, 186–191, and lysine 222 contribute to the CTP site; these read DIE and KTKPTQ. UTP-binding positions include 186-191 and lysine 222; that span reads KTKPTQ. The Glutamine amidotransferase type-1 domain occupies 292-545; the sequence is NIAVVGKYVD…VRAAREKKAG (254 aa). Glycine 353 is a binding site for L-glutamine. The active-site Nucleophile; for glutamine hydrolysis is the cysteine 380. Residues 381-384, glutamate 404, and arginine 471 contribute to the L-glutamine site; that span reads YGMQ. Residues histidine 518 and glutamate 520 contribute to the active site.

The protein belongs to the CTP synthase family. In terms of assembly, homotetramer.

It catalyses the reaction UTP + L-glutamine + ATP + H2O = CTP + L-glutamate + ADP + phosphate + 2 H(+). The enzyme catalyses L-glutamine + H2O = L-glutamate + NH4(+). It carries out the reaction UTP + NH4(+) + ATP = CTP + ADP + phosphate + 2 H(+). It participates in pyrimidine metabolism; CTP biosynthesis via de novo pathway; CTP from UDP: step 2/2. Allosterically activated by GTP, when glutamine is the substrate; GTP has no effect on the reaction when ammonia is the substrate. The allosteric effector GTP functions by stabilizing the protein conformation that binds the tetrahedral intermediate(s) formed during glutamine hydrolysis. Inhibited by the product CTP, via allosteric rather than competitive inhibition. Catalyzes the ATP-dependent amination of UTP to CTP with either L-glutamine or ammonia as the source of nitrogen. Regulates intracellular CTP levels through interactions with the four ribonucleotide triphosphates. The protein is CTP synthase of Xanthomonas euvesicatoria pv. vesicatoria (strain 85-10) (Xanthomonas campestris pv. vesicatoria).